Here is a 459-residue protein sequence, read N- to C-terminus: Argininosuccinate lyase (459 aa).

The protein belongs to the lyase 1 family. Argininosuccinate lyase subfamily.

The protein resides in the cytoplasm. It catalyses the reaction 2-(N(omega)-L-arginino)succinate = fumarate + L-arginine. Its pathway is amino-acid biosynthesis; L-arginine biosynthesis; L-arginine from L-ornithine and carbamoyl phosphate: step 3/3. This is Argininosuccinate lyase from Prochlorococcus marinus subsp. pastoris (strain CCMP1986 / NIES-2087 / MED4).